We begin with the raw amino-acid sequence, 95 residues long: Exodeoxyribonuclease 7 small subunit (95 aa).

The tract at residues 65 to 95 (ETINPAETARPAKPENAPESPRMNDLFGTES) is disordered.

The protein belongs to the XseB family. As to quaternary structure, heterooligomer composed of large and small subunits.

The protein resides in the cytoplasm. The enzyme catalyses Exonucleolytic cleavage in either 5'- to 3'- or 3'- to 5'-direction to yield nucleoside 5'-phosphates.. Functionally, bidirectionally degrades single-stranded DNA into large acid-insoluble oligonucleotides, which are then degraded further into small acid-soluble oligonucleotides. The sequence is that of Exodeoxyribonuclease 7 small subunit from Chlorobaculum tepidum (strain ATCC 49652 / DSM 12025 / NBRC 103806 / TLS) (Chlorobium tepidum).